Consider the following 348-residue polypeptide: Probable dual-specificity RNA methyltransferase RlmN (348 aa).

Glu-93 (proton acceptor) is an active-site residue. The Radical SAM core domain occupies 99–333 (TEKRLTACLS…VSFRKSRGLD (235 aa)). Cys-106 and Cys-338 are disulfide-bonded. [4Fe-4S] cluster contacts are provided by Cys-113, Cys-117, and Cys-120. S-adenosyl-L-methionine is bound by residues 160 to 161 (GE), Ser-190, 219 to 221 (SLH), and Asn-295. The active-site S-methylcysteine intermediate is Cys-338.

The protein belongs to the radical SAM superfamily. RlmN family. It depends on [4Fe-4S] cluster as a cofactor.

It localises to the cytoplasm. The catalysed reaction is adenosine(2503) in 23S rRNA + 2 reduced [2Fe-2S]-[ferredoxin] + 2 S-adenosyl-L-methionine = 2-methyladenosine(2503) in 23S rRNA + 5'-deoxyadenosine + L-methionine + 2 oxidized [2Fe-2S]-[ferredoxin] + S-adenosyl-L-homocysteine. It catalyses the reaction adenosine(37) in tRNA + 2 reduced [2Fe-2S]-[ferredoxin] + 2 S-adenosyl-L-methionine = 2-methyladenosine(37) in tRNA + 5'-deoxyadenosine + L-methionine + 2 oxidized [2Fe-2S]-[ferredoxin] + S-adenosyl-L-homocysteine. In terms of biological role, specifically methylates position 2 of adenine 2503 in 23S rRNA and position 2 of adenine 37 in tRNAs. The chain is Probable dual-specificity RNA methyltransferase RlmN from Prochlorococcus marinus (strain MIT 9312).